A 246-amino-acid chain; its full sequence is 3-deoxy-manno-octulosonate cytidylyltransferase (246 aa).

Belongs to the KdsB family.

It localises to the cytoplasm. The catalysed reaction is 3-deoxy-alpha-D-manno-oct-2-ulosonate + CTP = CMP-3-deoxy-beta-D-manno-octulosonate + diphosphate. Its pathway is nucleotide-sugar biosynthesis; CMP-3-deoxy-D-manno-octulosonate biosynthesis; CMP-3-deoxy-D-manno-octulosonate from 3-deoxy-D-manno-octulosonate and CTP: step 1/1. The protein operates within bacterial outer membrane biogenesis; lipopolysaccharide biosynthesis. Activates KDO (a required 8-carbon sugar) for incorporation into bacterial lipopolysaccharide in Gram-negative bacteria. The polypeptide is 3-deoxy-manno-octulosonate cytidylyltransferase (Bradyrhizobium diazoefficiens (strain JCM 10833 / BCRC 13528 / IAM 13628 / NBRC 14792 / USDA 110)).